Reading from the N-terminus, the 190-residue chain is Elongation factor P (190 aa).

Lysine 34 carries the post-translational modification N6-(3,6-diaminohexanoyl)-5-hydroxylysine.

The protein belongs to the elongation factor P family. May be beta-lysylated on the epsilon-amino group of Lys-34 by the combined action of EpmA and EpmB, and then hydroxylated on the C5 position of the same residue by EpmC (if this protein is present). Lysylation is critical for the stimulatory effect of EF-P on peptide-bond formation. The lysylation moiety may extend toward the peptidyltransferase center and stabilize the terminal 3-CCA end of the tRNA. Hydroxylation of the C5 position on Lys-34 may allow additional potential stabilizing hydrogen-bond interactions with the P-tRNA.

It is found in the cytoplasm. It participates in protein biosynthesis; polypeptide chain elongation. Involved in peptide bond synthesis. Alleviates ribosome stalling that occurs when 3 or more consecutive Pro residues or the sequence PPG is present in a protein, possibly by augmenting the peptidyl transferase activity of the ribosome. Modification of Lys-34 is required for alleviation. The sequence is that of Elongation factor P from Psychrobacter arcticus (strain DSM 17307 / VKM B-2377 / 273-4).